The following is a 721-amino-acid chain: Cell wall protein RBT1 (721 aa).

A signal peptide spans 1–20 (MRFATAQLAALAYYILSTEA). Residues 55-278 (GSKNKREAEI…DCQCDTPSPS (224 aa)) enclose the Flo11 domain. Disordered regions lie at residues 278–410 (STTT…LTTT), 453–510 (LTET…TVTE), and 555–666 (TPAT…ALVS). The span at 454–499 (TETTPVPSSVDSTSVTSAPETTPESTAPESSAPESSAPESSAPVTE) shows a compositional bias: low complexity. The segment covering 500-510 (TPTGPVSTVTE) has biased composition (polar residues). Composition is skewed to low complexity over residues 555–575 (TPATESASESSAPATESVPAT) and 584–663 (SSAP…KTSA). S696 carries the GPI-anchor amidated serine lipid modification. Positions 697–721 (SFEGAGNNMRLTYGAAIIGLAAFLI) are cleaved as a propeptide — removed in mature form.

Belongs to the HWP1 family. In terms of processing, the GPI-anchor is attached to the protein in the endoplasmic reticulum and serves to target the protein to the cell surface. There, the glucosamine-inositol phospholipid moiety is cleaved off and the GPI-modified mannoprotein is covalently attached via its lipidless GPI glycan remnant to the 1,6-beta-glucan of the outer cell wall layer.

The protein localises to the secreted. It localises to the cell wall. It is found in the membrane. GPI-anchored cell wall protein required for mating efficiency, biofilm formation, and virulence. Involved in normal disseminated infection, but not in intestinal colonization. The polypeptide is Cell wall protein RBT1 (RBT1) (Candida albicans (strain SC5314 / ATCC MYA-2876) (Yeast)).